The sequence spans 511 residues: Histidine ammonia-lyase (511 aa).

Positions 142–144 (ASG) form a cross-link, 5-imidazolinone (Ala-Gly). Position 143 is a 2,3-didehydroalanine (Ser) (Ser143).

Belongs to the PAL/histidase family. Contains an active site 4-methylidene-imidazol-5-one (MIO), which is formed autocatalytically by cyclization and dehydration of residues Ala-Ser-Gly.

Its subcellular location is the cytoplasm. The enzyme catalyses L-histidine = trans-urocanate + NH4(+). It participates in amino-acid degradation; L-histidine degradation into L-glutamate; N-formimidoyl-L-glutamate from L-histidine: step 1/3. This is Histidine ammonia-lyase from Brucella canis (strain ATCC 23365 / NCTC 10854 / RM-666).